Here is a 217-residue protein sequence, read N- to C-terminus: Proteasome subunit beta type-9 (217 aa).

Residues 1 to 18 (MLGEEAEPQWISEEVKTG) constitute a propeptide, removed in mature form. T19 functions as the Nucleophile in the catalytic mechanism.

It belongs to the peptidase T1B family. In terms of assembly, the 26S proteasome consists of a 20S proteasome core and two 19S regulatory subunits. The 20S proteasome core is composed of 28 subunits that are arranged in four stacked rings, resulting in a barrel-shaped structure. The two end rings are each formed by seven alpha subunits, and the two central rings are each formed by seven beta subunits. The catalytic chamber with the active sites is on the inside of the barrel. Component of the immunoproteasome, where it displaces the equivalent housekeeping subunit PSMB6. In terms of processing, autocleaved. The resulting N-terminal Thr residue of the mature subunit is responsible for the nucleophile proteolytic activity.

It localises to the cytoplasm. It is found in the nucleus. The catalysed reaction is Cleavage of peptide bonds with very broad specificity.. The proteasome is a multicatalytic proteinase complex which is characterized by its ability to cleave peptides with Arg, Phe, Tyr, Leu, and Glu adjacent to the leaving group at neutral or slightly basic pH. The proteasome has an ATP-dependent proteolytic activity. This subunit is involved in antigen processing to generate class I binding peptides. The polypeptide is Proteasome subunit beta type-9 (psmb9) (Oryzias latipes (Japanese rice fish)).